The following is a 181-amino-acid chain: Dual-action ribosomal maturation protein DarP (181 aa).

Residues 1–24 form a disordered region; the sequence is MTGIKRPMSQYQDDNEWEDWGPSK.

The protein belongs to the DarP family.

The protein localises to the cytoplasm. Its function is as follows. Member of a network of 50S ribosomal subunit biogenesis factors which assembles along the 30S-50S interface, preventing incorrect 23S rRNA structures from forming. Promotes peptidyl transferase center (PTC) maturation. This Aeromonas hydrophila subsp. hydrophila (strain ATCC 7966 / DSM 30187 / BCRC 13018 / CCUG 14551 / JCM 1027 / KCTC 2358 / NCIMB 9240 / NCTC 8049) protein is Dual-action ribosomal maturation protein DarP.